The chain runs to 95 residues: MEFYNIGDIMALKFTIEELSNQKRDTLGRNIDVTVFRLIRFMDLERYLGRGAHGVIYECGRELGLALNPKTVEDVVKFCEEYKIGKVEIVNKEPL.

This is an uncharacterized protein from Methanocaldococcus jannaschii (strain ATCC 43067 / DSM 2661 / JAL-1 / JCM 10045 / NBRC 100440) (Methanococcus jannaschii).